Here is a 591-residue protein sequence, read N- to C-terminus: MRSHYCGDVNKSHVGQEVTLVGWVNRSRDLGGVVFLDLRDREGLVQVVYDPDLPEVFNVASTLRAEFCVQVKGLVRARPNSQVNAQMKTGEIEVLGKELTIINSSEPLPLSLDNYQNNSEEQRLKYRYLDLRRPEMAQRLMFRAKVTSAVRRFLDSNGFLDIETPILTKATPEGARDYLVPSRTYKGQFFALPQSPQLFKQLLMMSGFDRYYQIVKCFRDEDLRADRQPEFTQIDIETSFMTSEQVMAKTEEMMRGLFLEMLNVDLGEFPRMTYNEAMRRFGSDKPDLRNPLELVDVADLLKEVEFAVFSGPANDEEGRVAALRIPGGASLSRKQIDDYTKFVGIYGAKGLAWMKLNDLTQGLEGIQSPVLKFLNEDIVNEIISRTGAQTGDIILFGADNATVVAESMGALRLKAGEDFNLLEGQWRPLWVVDFPMFEKINGSFHAVHHPFTAPRGVTPQELEANPANRVSDAYDMVLNGCELGGGSVRIHNQEMQSAVFRILGITDEEAKEKFGFLLEALRYGTPPHAGLAFGLDRIIMLMTGASSIRDVMAFPKTTTAACPLTNAPGFANPQQLAELGISVVKAAKTED.

Glutamate 173 contributes to the L-aspartate binding site. The tract at residues 197–200 (QLFK) is aspartate. L-aspartate is bound at residue arginine 219. ATP contacts are provided by residues 219-221 (RDE) and glutamine 228. Histidine 448 lines the L-aspartate pocket. Glutamate 482 provides a ligand contact to ATP. Arginine 489 is a binding site for L-aspartate. 534–537 (GLDR) contributes to the ATP binding site.

It belongs to the class-II aminoacyl-tRNA synthetase family. Type 1 subfamily. In terms of assembly, homodimer.

The protein resides in the cytoplasm. The enzyme catalyses tRNA(Asp) + L-aspartate + ATP = L-aspartyl-tRNA(Asp) + AMP + diphosphate. Its function is as follows. Catalyzes the attachment of L-aspartate to tRNA(Asp) in a two-step reaction: L-aspartate is first activated by ATP to form Asp-AMP and then transferred to the acceptor end of tRNA(Asp). The polypeptide is Aspartate--tRNA ligase (Shewanella sp. (strain MR-4)).